A 263-amino-acid polypeptide reads, in one-letter code: Leukocyte-associated immunoglobulin-like receptor 1 (263 aa).

Positions Met-1 to Thr-21 are cleaved as a signal peptide. Residues Gln-22–Tyr-144 lie on the Extracellular side of the membrane. The region spanning Pro-27–Glu-115 is the Ig-like C2-type domain. N-linked (GlcNAc...) asparagine glycosylation is found at Asn-34 and Asn-90. A disulfide bridge links Cys-49 with Cys-99. Residues Ile-145–Leu-165 traverse the membrane as a helical segment. Topologically, residues Arg-166–His-263 are cytoplasmic. Short sequence motifs (ITIM motif) lie at residues Val-226 to Leu-231 and Ser-255 to Ile-260. Tyr-228 and Tyr-257 each carry phosphotyrosine.

As to quaternary structure, interacts with SH2 domains of tyrosine-protein phosphatases PTPN6 and PTPN11. The interaction with PTPN6 is constitutive. Interacts with the SH2 domain of CSK. Binds with high affinity to extracellular matrix collagens, the interaction is functionally important. Post-translationally, phosphorylation at Tyr-228 and Tyr-257 activates it. May be phosphorylated by LCK. N-glycosylated. As to expression, expressed in lymphoid organs and in cell lines of hemopoietic origin.

The protein resides in the cell membrane. In terms of biological role, functions as an inhibitory receptor that plays a constitutive negative regulatory role on cytolytic function of natural killer (NK) cells, B-cells and T-cells. Activation by Tyr phosphorylation results in recruitment and activation of the phosphatases PTPN6 and PTPN11. It also reduces the increase of intracellular calcium evoked by B-cell receptor ligation. May also play its inhibitory role independently of SH2-containing phosphatases. Modulates cytokine production in CD4+ T-cells, down-regulating IL2 and IFNG production while inducing secretion of transforming growth factor beta. Also down-regulates IgG and IgE production in B-cells as well as IL8, IL10 and TNF secretion. Inhibits proliferation and induces apoptosis in myeloid leukemia cell lines as well as prevents nuclear translocation of NF-kappa-B p65 subunit/RELA and phosphorylation of I-kappa-B alpha/CHUK in these cells. Inhibits the differentiation of peripheral blood precursors towards dendritic cells. The protein is Leukocyte-associated immunoglobulin-like receptor 1 (Lair1) of Mus musculus (Mouse).